A 434-amino-acid polypeptide reads, in one-letter code: Sodium/bile acid cotransporter 5 (434 aa).

Positions Met-1–Ala-18 are cleaved as a signal peptide. At Arg-19–Ser-129 the chain is on the extracellular side. N-linked (GlcNAc...) asparagine glycans are attached at residues Asn-73 and Asn-96. A helical membrane pass occupies residues Leu-130 to Leu-150. Topologically, residues Leu-151–Pro-172 are cytoplasmic. Residues Leu-173–Leu-193 traverse the membrane as a helical segment. At Ser-194–Gln-195 the chain is on the extracellular side. The chain crosses the membrane as a helical span at residues Ile-196–Gly-216. The Cytoplasmic portion of the chain corresponds to Gly-217 to Leu-232. A helical transmembrane segment spans residues Ala-233–Tyr-255. Residues Ser-256–Pro-268 are Extracellular-facing. Residues Val-269–Ile-289 traverse the membrane as a helical segment. At Lys-290–Pro-306 the chain is on the cytoplasmic side. Residues Leu-307–Leu-327 traverse the membrane as a helical segment. Over Arg-328–Asn-331 the chain is Extracellular. A helical transmembrane segment spans residues Leu-332–Phe-352. Residues Ala-353–Thr-365 lie on the Cytoplasmic side of the membrane. Residues Val-366–Phe-386 form a helical membrane-spanning segment. Topologically, residues Pro-387–Ser-395 are extracellular. Residues Val-396–Tyr-416 traverse the membrane as a helical segment. Topologically, residues Lys-417 to Val-434 are cytoplasmic.

The protein belongs to the bile acid:sodium symporter (BASS) (TC 2.A.28) family.

The protein localises to the membrane. The sequence is that of Sodium/bile acid cotransporter 5 (Slc10a5) from Rattus norvegicus (Rat).